The following is a 184-amino-acid chain: CKLF-like MARVEL transmembrane domain-containing protein 3 (184 aa).

A compositionally biased stretch (acidic residues) spans 1 to 12 (MWPPDAEPEPDP). Residues 1 to 22 (MWPPDAEPEPDPESAHGPRSGR) are disordered. Positions 36-155 (FLCSLKGRLL…DFYLIFNEVA (120 aa)) constitute an MARVEL domain. 3 helical membrane-spanning segments follow: residues 64–84 (ASAF…FLFA), 96–116 (LCWP…YFVI), and 131–151 (AAGV…YLIF). The segment at 163-184 (SGNETTAHRTEEENSNSDSDSD) is disordered. The span at 175–184 (ENSNSDSDSD) shows a compositional bias: acidic residues.

The protein belongs to the chemokine-like factor family.

It is found in the membrane. The protein is CKLF-like MARVEL transmembrane domain-containing protein 3 (Cmtm3) of Mus musculus (Mouse).